We begin with the raw amino-acid sequence, 614 residues long: MRILTIHARKFHYKALSQALDKPEELTNENKEGFFENVLVVFTSVEEGDNEKVVEKAVTEILDIANRVKPKTILLYPYAHLSSDLASPSQALEIMKLLEQKLRGKTDLEVYRAPFGWYKEFMLDCYGHPLSELSKTIRITGGGEVVRRELKKEFYILTPDGKVYDPEKFNYDKYPDLKILVDKEVFGKELPGGVNRVNDYCRKFGFEWEPMSDHGHMRYGPHAVIIMESIMQYSWNIVRSLGIPVYKVMGTNMFNLSEKPVLEHALLFGDRLYELKVDNEKFVLRYAACHQQFAMLRDWIISYKNLPFGMFEVADSYRLEQRGELNLCFRLRKFYMPDLHILNRDLNEAIKISRIVQDKILEEIAKIGRKYVALYNVTSDFFDKYRDILIEFVRRENYPVLVSVIPSGIYYWVLNVEYHIIDNLNRPREIATFQIDIGNGERFNITYTDEKGEKHHPVIIHTAIIGGIERFIYTIFDTAALMEKEGKTPYIPTWLAPVQVRIIPIKNEYLDYAEKVAEKIENAGFRVDIDDRGESLGKKIRDAGREWIPYIVVIGEREVRSNTINVRIRRTNDQKVMVTDELIRILEEETKNYPRVSLTMPKYLSKRPIPSYHA.

The segment at 1 to 138 (MRILTIHARK…PLSELSKTIR (138 aa)) is editing domain. Catalytic stretches follow at residues 195–492 (NRVN…PYIP) and 196–492 (RVND…PYIP). The Zn(2+) site is built by cysteine 289, histidine 340, and histidine 461.

It belongs to the class-II aminoacyl-tRNA synthetase family. As to quaternary structure, homodimer. Zn(2+) is required as a cofactor.

It is found in the cytoplasm. The catalysed reaction is tRNA(Thr) + L-threonine + ATP = L-threonyl-tRNA(Thr) + AMP + diphosphate + H(+). Its function is as follows. Catalyzes the attachment of threonine to tRNA(Thr) in a two-step reaction: L-threonine is first activated by ATP to form Thr-AMP and then transferred to the acceptor end of tRNA(Thr). Also edits incorrectly charged L-seryl-tRNA(Thr). This is Threonine--tRNA ligase from Staphylothermus marinus (strain ATCC 43588 / DSM 3639 / JCM 9404 / F1).